Consider the following 330-residue polypeptide: ADP-L-glycero-D-manno-heptose-6-epimerase (330 aa).

Residues 11-12 (FI), 32-33 (DD), Q39, Q54, 75-79 (QGACA), and N92 each bind NADP(+). The active-site Proton acceptor is Y139. K143 is a binding site for NADP(+). N168 provides a ligand contact to substrate. NADP(+) is bound by residues V169 and K177. K177 serves as the catalytic Proton acceptor. Substrate is bound by residues R179, H186, 200 to 203 (FGEH), R213, and Y292.

Belongs to the NAD(P)-dependent epimerase/dehydratase family. HldD subfamily. As to quaternary structure, homopentamer. The cofactor is NADP(+).

The catalysed reaction is ADP-D-glycero-beta-D-manno-heptose = ADP-L-glycero-beta-D-manno-heptose. It participates in nucleotide-sugar biosynthesis; ADP-L-glycero-beta-D-manno-heptose biosynthesis; ADP-L-glycero-beta-D-manno-heptose from D-glycero-beta-D-manno-heptose 7-phosphate: step 4/4. Catalyzes the interconversion between ADP-D-glycero-beta-D-manno-heptose and ADP-L-glycero-beta-D-manno-heptose via an epimerization at carbon 6 of the heptose. The polypeptide is ADP-L-glycero-D-manno-heptose-6-epimerase (Pseudomonas aeruginosa (strain UCBPP-PA14)).